The following is a 631-amino-acid chain: Pro-interleukin-16 (631 aa).

Disordered stretches follow at residues 30-269 (ENPG…FPLT) and 317-344 (PKEG…ASDT). The segment covering 132–144 (SSSSSSIKQRISS) has biased composition (low complexity). S221 carries the post-translational modification Phosphoserine. Residues 322-344 (SPTSSSNEDSAANGSAETSASDT) are compositionally biased toward polar residues. The segment at 405–501 (KQLDSIHVTI…IVTRKLTAES (97 aa)) is interaction with PPP1R12A, PPP1R12B and PPP1R12C. PDZ domains follow at residues 411-496 (HVTI…VTRK) and 533-618 (TVTL…IRRK).

In terms of assembly, homotetramer. Pro-interleukin-16 interacts (via PDZ 2 domain) with PPP1R12A, PPP1R12B and PPP1R12C. Pro-interleukin-16 interacts with GRIN2A. Pro-interleukin-16 interacts with GABPB1. Pro-interleukin-16 interacts (via PDZ 3 domain) with HDAC3.

The protein resides in the secreted. Its subcellular location is the cytoplasm. It localises to the nucleus. Functionally, interleukin-16 stimulates a migratory response in CD4+ lymphocytes, monocytes, and eosinophils. Primes CD4+ T-cells for IL-2 and IL-15 responsiveness. Also induces T-lymphocyte expression of interleukin 2 receptor. Ligand for CD4. Pro-interleukin-16 is involved in cell cycle progression in T-cells. Appears to be involved in transcriptional regulation of SKP2 and is probably part of a transcriptional repression complex on the core promoter of the SKP2 gene. May act as a scaffold for GABPB1 (the DNA-binding subunit the GABP transcription factor complex) and HDAC3 thus maintaining transcriptional repression and blocking cell cycle progression in resting T-cells. In Chlorocebus aethiops (Green monkey), this protein is Pro-interleukin-16 (IL16).